Reading from the N-terminus, the 86-residue chain is Small ribosomal subunit protein bS18c (86 aa).

Belongs to the bacterial ribosomal protein bS18 family. Part of the 30S ribosomal subunit.

The protein resides in the plastid. The protein localises to the chloroplast. The sequence is that of Small ribosomal subunit protein bS18c from Larix laricina (Tamarack).